The sequence spans 86 residues: Small ribosomal subunit protein bS18 (86 aa).

Positions 1-20 are disordered; the sequence is MSREEGNNGRRPGGKMRRSR.

This sequence belongs to the bacterial ribosomal protein bS18 family. As to quaternary structure, part of the 30S ribosomal subunit. Forms a tight heterodimer with protein bS6.

Functionally, binds as a heterodimer with protein bS6 to the central domain of the 16S rRNA, where it helps stabilize the platform of the 30S subunit. The chain is Small ribosomal subunit protein bS18 from Clostridium beijerinckii (strain ATCC 51743 / NCIMB 8052) (Clostridium acetobutylicum).